The primary structure comprises 95 residues: Probable FAD-linked sulfhydryl oxidase OPG072 (95 aa).

The Intravirion portion of the chain corresponds to 1-8; that stretch reads MNPKHWGR. Residues 1 to 95 enclose the ERV/ALR sulfhydryl oxidase domain; it reads MNPKHWGRAV…AIDVSKVKPL (95 aa). Residues 9-25 form a helical membrane-spanning segment; it reads AVWTIIFIVLSQAGLDG. Residues 26–95 lie on the Virion surface side of the membrane; that stretch reads NIEACKRKLY…AIDVSKVKPL (70 aa). Cysteine 43 and cysteine 46 are disulfide-bonded.

The protein belongs to the orthopoxvirus OPG072 family. In terms of assembly, interacts with OPG128; this interaction involves formation of a transient disulfide-bonded intermediate, allowing disulfide bond transfer. Requires FAD as cofactor.

The protein localises to the virion membrane. Its subcellular location is the host cytoplasm. The enzyme catalyses 2 R'C(R)SH + O2 = R'C(R)S-S(R)CR' + H2O2. Its function is as follows. FAD-dependent sulfhydryl oxidase that catalyzes disulfide bond formation. The complete pathway for formation of disulfide bonds in intracellular virion membrane proteins sequentially involves thiol-disulfide transfer between OPG072, OPG128 and OPG088. The sequence is that of Probable FAD-linked sulfhydryl oxidase OPG072 (OPG072) from Monkeypox virus.